We begin with the raw amino-acid sequence, 467 residues long: 3-isopropylmalate dehydratase large subunit (467 aa).

[4Fe-4S] cluster is bound by residues Cys347, Cys408, and Cys411.

It belongs to the aconitase/IPM isomerase family. LeuC type 1 subfamily. In terms of assembly, heterodimer of LeuC and LeuD. [4Fe-4S] cluster is required as a cofactor.

The catalysed reaction is (2R,3S)-3-isopropylmalate = (2S)-2-isopropylmalate. It participates in amino-acid biosynthesis; L-leucine biosynthesis; L-leucine from 3-methyl-2-oxobutanoate: step 2/4. In terms of biological role, catalyzes the isomerization between 2-isopropylmalate and 3-isopropylmalate, via the formation of 2-isopropylmaleate. The protein is 3-isopropylmalate dehydratase large subunit of Bordetella bronchiseptica (strain ATCC BAA-588 / NCTC 13252 / RB50) (Alcaligenes bronchisepticus).